The following is a 183-amino-acid chain: ATP synthase subunit b, chloroplastic (183 aa).

Residues 27–49 traverse the membrane as a helical segment; it reads LATNLINLTVVVGVLIYFGKGVL.

The protein belongs to the ATPase B chain family. As to quaternary structure, F-type ATPases have 2 components, F(1) - the catalytic core - and F(0) - the membrane proton channel. F(1) has five subunits: alpha(3), beta(3), gamma(1), delta(1), epsilon(1). F(0) has four main subunits: a(1), b(1), b'(1) and c(10-14). The alpha and beta chains form an alternating ring which encloses part of the gamma chain. F(1) is attached to F(0) by a central stalk formed by the gamma and epsilon chains, while a peripheral stalk is formed by the delta, b and b' chains.

Its subcellular location is the plastid. The protein resides in the chloroplast thylakoid membrane. In terms of biological role, f(1)F(0) ATP synthase produces ATP from ADP in the presence of a proton or sodium gradient. F-type ATPases consist of two structural domains, F(1) containing the extramembraneous catalytic core and F(0) containing the membrane proton channel, linked together by a central stalk and a peripheral stalk. During catalysis, ATP synthesis in the catalytic domain of F(1) is coupled via a rotary mechanism of the central stalk subunits to proton translocation. Functionally, component of the F(0) channel, it forms part of the peripheral stalk, linking F(1) to F(0). The sequence is that of ATP synthase subunit b, chloroplastic from Oryza nivara (Indian wild rice).